The sequence spans 202 residues: uncharacterized protein (202 aa).

The interval 118 to 202 (SSVSPVSSKK…KVSGTKKVKA (85 aa)) is disordered. Phosphoserine is present on Ser121. 2 stretches are compositionally biased toward basic residues: residues 142-163 (EKSKKKKEKKEKKDKLKKKSKR) and 186-202 (SSKSGLKKVSGTKKVKA).

Its subcellular location is the nucleus. It is found in the nucleolus. This is an uncharacterized protein from Schizosaccharomyces pombe (strain 972 / ATCC 24843) (Fission yeast).